We begin with the raw amino-acid sequence, 394 residues long: 5-azacytidine-induced protein 2 (394 aa).

The homodimerization stretch occupies residues 1 to 197 (MDALVEDDIC…IELRKAKQTD (197 aa)). Coiled coils occupy residues 40–76 (ALVT…LIAR) and 102–196 (DRDN…AKQT). The interval 216–257 (SDNMQHAYWELKREMSNLHLVTQVQAELLRKLKTSTAIKKAC) is interaction with TBK1 and IKBKE. Phosphoserine occurs at positions 318 and 355. Residues 355–379 (SPPKSSETAFGETKSKTLPLPNLPP) are disordered.

Homodimer. Interacts with IKBKE, TBK1 and TICAM1. Interacts with TAX1BP1. Interacts with CALCOCO2. Post-translationally, ubiquitinated via 'Lys-48'-linked polyubiquitination by TRIM38, leading to its degradation.

Its subcellular location is the cytoplasm. Its function is as follows. Adapter protein which binds TBK1 and IKBKE playing a role in antiviral innate immunity. Activates serine/threonine-protein kinase TBK1 and facilitates its oligomerization. Enhances the phosphorylation of NF-kappa-B p65 subunit RELA by TBK1. Promotes TBK1-induced as well as TNF-alpha or PMA-induced activation of NF-kappa-B. Participates in IFNB promoter activation via TICAM1. This chain is 5-azacytidine-induced protein 2 (AZI2), found in Macaca fascicularis (Crab-eating macaque).